A 116-amino-acid chain; its full sequence is Holo-[acyl-carrier-protein] synthase (116 aa).

Residues Asp8 and Glu59 each coordinate Mg(2+).

Belongs to the P-Pant transferase superfamily. AcpS family. Mg(2+) serves as cofactor.

The protein resides in the cytoplasm. The enzyme catalyses apo-[ACP] + CoA = holo-[ACP] + adenosine 3',5'-bisphosphate + H(+). Its function is as follows. Transfers the 4'-phosphopantetheine moiety from coenzyme A to a Ser of acyl-carrier-protein. The chain is Holo-[acyl-carrier-protein] synthase from Staphylococcus saprophyticus subsp. saprophyticus (strain ATCC 15305 / DSM 20229 / NCIMB 8711 / NCTC 7292 / S-41).